The sequence spans 350 residues: Anthranilate phosphoribosyltransferase (350 aa).

5-phospho-alpha-D-ribose 1-diphosphate-binding positions include G94, 97–98, T102, 104–107, 122–130, and S134; these read GD, NIST, and KHGNRSVSS. G94 contributes to the anthranilate binding site. S106 contacts Mg(2+). Residue N125 participates in anthranilate binding. R180 is a binding site for anthranilate. Residues D239 and E240 each contribute to the Mg(2+) site.

Belongs to the anthranilate phosphoribosyltransferase family. As to quaternary structure, homodimer. It depends on Mg(2+) as a cofactor.

It catalyses the reaction N-(5-phospho-beta-D-ribosyl)anthranilate + diphosphate = 5-phospho-alpha-D-ribose 1-diphosphate + anthranilate. It participates in amino-acid biosynthesis; L-tryptophan biosynthesis; L-tryptophan from chorismate: step 2/5. In terms of biological role, catalyzes the transfer of the phosphoribosyl group of 5-phosphorylribose-1-pyrophosphate (PRPP) to anthranilate to yield N-(5'-phosphoribosyl)-anthranilate (PRA). The protein is Anthranilate phosphoribosyltransferase of Geotalea daltonii (strain DSM 22248 / JCM 15807 / FRC-32) (Geobacter daltonii).